The following is a 798-amino-acid chain: Vacuolar protein sorting-associated protein 53 homolog (798 aa).

The protein belongs to the VPS53 family. Component of the Golgi-associated retrograde protein (GARP) complex, also called VFT (VPS fifty-three) complex, composed of vps-51, vps-52, vps-53 and vps-54. Within the complex interacts with vps-51, vps-52 and vps-54. In terms of tissue distribution, ubiquitously expressed, with particularly strong expression in neuronal cells. Specifically expressed in head and tail neurons and in the pharynx and ventral cord motor neurons.

The protein resides in the golgi apparatus. It localises to the trans-Golgi network membrane. It is found in the endosome membrane. The protein localises to the perikaryon. Its subcellular location is the cytoplasm. The protein resides in the perinuclear region. Functionally, acts as a component of the GARP complex that is involved in retrograde transport from early and late endosomes to the trans-Golgi network (TGN). The GARP complex facilitates tethering as well as SNARE complex assembly at the Golgi. Plays a role in the trafficking of cargo to dense-core vesicles, probably through association with the EARP-interacting protein eipr-1. Important for neuronal function. The polypeptide is Vacuolar protein sorting-associated protein 53 homolog (Caenorhabditis elegans).